The following is a 419-amino-acid chain: Gamma-glutamyl phosphate reductase (419 aa).

This sequence belongs to the gamma-glutamyl phosphate reductase family.

The protein resides in the cytoplasm. The enzyme catalyses L-glutamate 5-semialdehyde + phosphate + NADP(+) = L-glutamyl 5-phosphate + NADPH + H(+). It functions in the pathway amino-acid biosynthesis; L-proline biosynthesis; L-glutamate 5-semialdehyde from L-glutamate: step 2/2. Functionally, catalyzes the NADPH-dependent reduction of L-glutamate 5-phosphate into L-glutamate 5-semialdehyde and phosphate. The product spontaneously undergoes cyclization to form 1-pyrroline-5-carboxylate. The chain is Gamma-glutamyl phosphate reductase from Nitratidesulfovibrio vulgaris (strain DP4) (Desulfovibrio vulgaris).